Consider the following 155-residue polypeptide: Transcription antitermination protein NusB (155 aa).

It belongs to the NusB family.

Involved in transcription antitermination. Required for transcription of ribosomal RNA (rRNA) genes. Binds specifically to the boxA antiterminator sequence of the ribosomal RNA (rrn) operons. The protein is Transcription antitermination protein NusB of Vibrio atlanticus (strain LGP32) (Vibrio splendidus (strain Mel32)).